The sequence spans 182 residues: Doublesex- and mab-3-related transcription factor C1 (182 aa).

Residue T15 is modified to Phosphoserine. A compositionally biased stretch (polar residues) spans 26–39 (AQVDTATQEESSQG). 2 disordered regions span residues 26 to 48 (AQVD…QHPE) and 136 to 174 (QTRH…PSGH).

The protein belongs to the DMRT family. As to expression, expressed in Sertoli cells in male testis.

In Mus musculus (Mouse), this protein is Doublesex- and mab-3-related transcription factor C1 (Dmrtc1).